A 304-amino-acid polypeptide reads, in one-letter code: Ornithine carbamoyltransferase (304 aa).

Carbamoyl phosphate contacts are provided by residues 47–50 (STRT), Arg-98, and 125–128 (HPCQ). L-ornithine is bound by residues Asn-156, Asp-221, and 225–226 (SM). Residues 262–263 (CL) and Arg-290 contribute to the carbamoyl phosphate site.

The protein belongs to the aspartate/ornithine carbamoyltransferase superfamily. OTCase family.

The protein resides in the cytoplasm. The catalysed reaction is carbamoyl phosphate + L-ornithine = L-citrulline + phosphate + H(+). It participates in amino-acid biosynthesis; L-arginine biosynthesis; L-arginine from L-ornithine and carbamoyl phosphate: step 1/3. Functionally, reversibly catalyzes the transfer of the carbamoyl group from carbamoyl phosphate (CP) to the N(epsilon) atom of ornithine (ORN) to produce L-citrulline. The sequence is that of Ornithine carbamoyltransferase from Methanococcus aeolicus (strain ATCC BAA-1280 / DSM 17508 / OCM 812 / Nankai-3).